Here is a 631-residue protein sequence, read N- to C-terminus: Leukocyte immunoglobulin-like receptor subfamily B member 3 (631 aa).

Residues 1–23 form the signal peptide; sequence MTPALTALLCLGLSLGPRTRVQA. At 24–443 the chain is on the extracellular side; the sequence is GPFPKPTLWA…STPGLGRYLE (420 aa). 4 Ig-like C2-type domains span residues 42 to 100, 111 to 229, 225 to 314, and 338 to 419; these read GSPV…RCHY, DPLE…SLLT, PSLL…DPLN, and GENV…LVVS. Cysteines 49 and 98 form a disulfide. Residues 59-70 show a composition bias toward basic and acidic residues; the sequence is RLHKEGSPEPLD. Residues 59 to 78 form a disordered region; the sequence is RLHKEGSPEPLDRNNPLEPK. Asparagine 139 carries an N-linked (GlcNAc...) asparagine glycan. Cystine bridges form between cysteine 144-cysteine 196 and cysteine 245-cysteine 296. Asparagine 280, asparagine 301, and asparagine 340 each carry an N-linked (GlcNAc...) asparagine glycan. The cysteines at positions 345 and 396 are disulfide-linked. A helical transmembrane segment spans residues 444 to 464; it reads VLIGVSVAFVLLLFLLLFLLL. The Cytoplasmic segment spans residues 465 to 631; sequence RRQRHSKHRT…PSIYATLAIH (167 aa). The interval 470 to 631 is disordered; it reads SKHRTSDQRK…PSIYATLAIH (162 aa). The span at 473–482 shows a compositional bias: basic and acidic residues; that stretch reads RTSDQRKTDF. Residues 512 to 517 carry the ITIM motif 1 motif; the sequence is NLYAAV. Composition is skewed to basic and acidic residues over residues 520-537 and 567-581; these read TQSE…HDED and LDTK…RQMD. Over residues 588 to 600 the composition is skewed to polar residues; that stretch reads EASQDVTYAQLHS. Short sequence motifs (ITIM motif) lie at residues 593–598 and 623–628; these read VTYAQL and SIYATL. Phosphotyrosine; by LYN occurs at positions 595 and 625.

Interacts with LYN, PTPN6/SHP-1 and PTPN11/SHP-2. In terms of processing, phosphorylated on tyrosine residues by LYN. Phosphorylation at Tyr-595 and Tyr-625 is important for interaction with PTPN6/SHP-1 and PTPN11/SHP-2. In terms of tissue distribution, detected in monocytes and B-cells.

It is found in the cell membrane. May act as receptor for class I MHC antigens. Becomes activated upon coligation of LILRB3 and immune receptors, such as FCGR2B and the B-cell receptor. Down-regulates antigen-induced B-cell activation by recruiting phosphatases to its immunoreceptor tyrosine-based inhibitor motifs (ITIM). In Homo sapiens (Human), this protein is Leukocyte immunoglobulin-like receptor subfamily B member 3 (LILRB3).